The chain runs to 643 residues: 1-deoxy-D-xylulose-5-phosphate synthase (643 aa).

Residues His78 and 119–121 each bind thiamine diphosphate; that span reads AHS. Asp150 is a Mg(2+) binding site. Thiamine diphosphate contacts are provided by residues 151–152, Asn179, Tyr288, and Glu370; that span reads GS. Asn179 lines the Mg(2+) pocket.

It belongs to the transketolase family. DXPS subfamily. As to quaternary structure, homodimer. Mg(2+) serves as cofactor. Requires thiamine diphosphate as cofactor.

It carries out the reaction D-glyceraldehyde 3-phosphate + pyruvate + H(+) = 1-deoxy-D-xylulose 5-phosphate + CO2. It participates in metabolic intermediate biosynthesis; 1-deoxy-D-xylulose 5-phosphate biosynthesis; 1-deoxy-D-xylulose 5-phosphate from D-glyceraldehyde 3-phosphate and pyruvate: step 1/1. Functionally, catalyzes the acyloin condensation reaction between C atoms 2 and 3 of pyruvate and glyceraldehyde 3-phosphate to yield 1-deoxy-D-xylulose-5-phosphate (DXP). The chain is 1-deoxy-D-xylulose-5-phosphate synthase from Brucella ovis (strain ATCC 25840 / 63/290 / NCTC 10512).